Here is a 113-residue protein sequence, read N- to C-terminus: Non-specific lipid-transfer protein 6 (113 aa).

The N-terminal stretch at 1 to 19 is a signal peptide; it reads MRSLLLAVCLVLALHCGEA. Cystine bridges form between Cys23-Cys70, Cys33-Cys47, Cys48-Cys95, and Cys68-Cys109.

This sequence belongs to the plant LTP family.

Functionally, plant non-specific lipid-transfer proteins transfer phospholipids as well as galactolipids across membranes. May play a role in wax or cutin deposition in the cell walls of expanding epidermal cells and certain secretory tissues. The chain is Non-specific lipid-transfer protein 6 (LTP6) from Arabidopsis thaliana (Mouse-ear cress).